A 123-amino-acid chain; its full sequence is MIKGKSRTEVKALAQYICMSAHKARRVIDQIRGRSYEQTLMILELMPYRASYHIFKLVYSAAANASHNKGLNEADSFISKAEVNGGVIVKKCKPRARGRSYPIKRPTCHITIVLNKRSNLTKK.

Belongs to the universal ribosomal protein uL22 family. In terms of assembly, part of the 50S ribosomal subunit.

The protein resides in the plastid. It is found in the chloroplast. Its function is as follows. This protein binds specifically to 23S rRNA. The globular domain of the protein is located near the polypeptide exit tunnel on the outside of the subunit, while an extended beta-hairpin is found that lines the wall of the exit tunnel in the center of the 70S ribosome. The chain is Large ribosomal subunit protein uL22c (rpl22) from Illicium oligandrum (Star anise).